The sequence spans 92 residues: Small ribosomal subunit protein uS19c (92 aa).

The protein belongs to the universal ribosomal protein uS19 family.

The protein localises to the plastid. Functionally, protein S19 forms a complex with S13 that binds strongly to the 16S ribosomal RNA. This chain is Small ribosomal subunit protein uS19c, found in Cuscuta obtusiflora (Peruvian dodder).